A 104-amino-acid chain; its full sequence is Photosystem II reaction center Psb28 protein (104 aa).

The protein belongs to the Psb28 family. Part of the photosystem II complex.

It is found in the cellular thylakoid membrane. The sequence is that of Photosystem II reaction center Psb28 protein from Synechococcus sp. (strain JA-3-3Ab) (Cyanobacteria bacterium Yellowstone A-Prime).